The following is an 87-amino-acid chain: Small ribosomal subunit protein uS17 (87 aa).

It belongs to the universal ribosomal protein uS17 family. In terms of assembly, part of the 30S ribosomal subunit.

Functionally, one of the primary rRNA binding proteins, it binds specifically to the 5'-end of 16S ribosomal RNA. This is Small ribosomal subunit protein uS17 from Bacillus licheniformis (strain ATCC 14580 / DSM 13 / JCM 2505 / CCUG 7422 / NBRC 12200 / NCIMB 9375 / NCTC 10341 / NRRL NRS-1264 / Gibson 46).